A 366-amino-acid polypeptide reads, in one-letter code: Mitogen-activated protein kinase 13 (366 aa).

Positions 25 to 308 constitute a Protein kinase domain; it reads YVSLTHIGSG…ASQALAHPFF (284 aa). 31 to 39 lines the ATP pocket; that stretch reads IGSGAYGSV. Phosphoserine is present on Ser-47. Lys-54 is an ATP binding site. The Proton acceptor role is filled by Asp-150. Phosphothreonine; by MAP2K3, MAP2K4, MAP2K6 and MAP2K7 is present on Thr-180. The TXY signature appears at 180-182; it reads TGY. Tyr-182 bears the Phosphotyrosine; by MAP2K3, MAP2K4, MAP2K6 and MAP2K7 mark. A Phosphoserine modification is found at Ser-350.

It belongs to the protein kinase superfamily. CMGC Ser/Thr protein kinase family. MAP kinase subfamily. Interacts with MAPK8IP2. It depends on Mg(2+) as a cofactor. In terms of processing, dually phosphorylated on Thr-180 and Tyr-182 by MAP2K3/MKK3, MAP2K4/MKK4, MAP2K6/MKK6 and MAP2K7/MKK7, which activates the enzyme. Dephosphorylated by dual specificity phosphatase DUSP1.

The catalysed reaction is L-seryl-[protein] + ATP = O-phospho-L-seryl-[protein] + ADP + H(+). It carries out the reaction L-threonyl-[protein] + ATP = O-phospho-L-threonyl-[protein] + ADP + H(+). With respect to regulation, activated by phosphorylation on threonine and tyrosine by dual specificity kinases, MAP2K3/MKK3 MAP2K6/MKK6, MAP2K4/MKK4 and MAP2K7/MKK7. Activation by ultraviolet radiation, hyperosmotic shock, anisomycin or by TNF-alpha is mediated by MAP2K3/MKK3. Inhibited by dual specificity phosphatase DUSP1. Functionally, serine/threonine kinase which acts as an essential component of the MAP kinase signal transduction pathway. MAPK13 is one of the four p38 MAPKs which play an important role in the cascades of cellular responses evoked by extracellular stimuli such as pro-inflammatory cytokines or physical stress leading to direct activation of transcription factors such as ELK1 and ATF2. Accordingly, p38 MAPKs phosphorylate a broad range of proteins and it has been estimated that they may have approximately 200 to 300 substrates each. MAPK13 is one of the less studied p38 MAPK isoforms. Some of the targets are downstream kinases such as MAPKAPK2, which are activated through phosphorylation and further phosphorylate additional targets. Plays a role in the regulation of protein translation by phosphorylating and inactivating EEF2K. Involved in cytoskeletal remodeling through phosphorylation of MAPT and STMN1. Mediates UV irradiation induced up-regulation of the gene expression of CXCL14. Plays an important role in the regulation of epidermal keratinocyte differentiation, apoptosis and skin tumor development. Phosphorylates the transcriptional activator MYB in response to stress which leads to rapid MYB degradation via a proteasome-dependent pathway. MAPK13 also phosphorylates and down-regulates PRKD1 during regulation of insulin secretion in pancreatic beta cells. The sequence is that of Mitogen-activated protein kinase 13 (MAPK13) from Bos taurus (Bovine).